The sequence spans 422 residues: Enolase (422 aa).

Q162 serves as a coordination point for (2R)-2-phosphoglycerate. E204 serves as the catalytic Proton donor. Mg(2+)-binding residues include D241, E285, and D312. (2R)-2-phosphoglycerate-binding residues include K337, R366, S367, and K388. Catalysis depends on K337, which acts as the Proton acceptor.

This sequence belongs to the enolase family. It depends on Mg(2+) as a cofactor.

It is found in the cytoplasm. The protein localises to the secreted. The protein resides in the cell surface. It catalyses the reaction (2R)-2-phosphoglycerate = phosphoenolpyruvate + H2O. The protein operates within carbohydrate degradation; glycolysis; pyruvate from D-glyceraldehyde 3-phosphate: step 4/5. Catalyzes the reversible conversion of 2-phosphoglycerate (2-PG) into phosphoenolpyruvate (PEP). It is essential for the degradation of carbohydrates via glycolysis. This is Enolase from Wolinella succinogenes (strain ATCC 29543 / DSM 1740 / CCUG 13145 / JCM 31913 / LMG 7466 / NCTC 11488 / FDC 602W) (Vibrio succinogenes).